The following is a 227-amino-acid chain: Deoxyribose-phosphate aldolase (227 aa).

The active-site Proton donor/acceptor is the Asp-98. Lys-161 serves as the catalytic Schiff-base intermediate with acetaldehyde. Lys-191 serves as the catalytic Proton donor/acceptor.

The protein belongs to the DeoC/FbaB aldolase family. DeoC type 1 subfamily.

It localises to the cytoplasm. The catalysed reaction is 2-deoxy-D-ribose 5-phosphate = D-glyceraldehyde 3-phosphate + acetaldehyde. It functions in the pathway carbohydrate degradation; 2-deoxy-D-ribose 1-phosphate degradation; D-glyceraldehyde 3-phosphate and acetaldehyde from 2-deoxy-alpha-D-ribose 1-phosphate: step 2/2. In terms of biological role, catalyzes a reversible aldol reaction between acetaldehyde and D-glyceraldehyde 3-phosphate to generate 2-deoxy-D-ribose 5-phosphate. The protein is Deoxyribose-phosphate aldolase of Frankia alni (strain DSM 45986 / CECT 9034 / ACN14a).